A 277-amino-acid chain; its full sequence is Protein G1-like2 (277 aa).

The span at 1–16 shows a compositional bias: gly residues; it reads MQGGGGGDSSGGGGGE. Disordered regions lie at residues 1 to 28, 141 to 203, and 225 to 245; these read MQGGGGGDSSGGGGGEAPRPSRYESQKR, RGIA…GHFF, and HQVSNAGNGGNTNTNTNTNTG. The segment covering 19 to 28 has biased composition (basic and acidic residues); sequence RPSRYESQKR. The ALOG domain maps to 22 to 149; that stretch reads RYESQKRRDW…ARGIAYEKKR (128 aa). Residues 147-151 carry the Nuclear localization signal motif; sequence KKRRK. Low complexity predominate over residues 154–177; that stretch reads PTSSSSSQAAAAAAAATSPASPAA. Pro residues predominate over residues 178-187; sequence SPTPPPPPPT.

This sequence belongs to the plant homeotic and developmental regulators ALOG protein family.

It localises to the nucleus. Its function is as follows. Probable transcription regulator that acts as a developmental regulator by promoting cell growth in response to light. The sequence is that of Protein G1-like2 (G1L2) from Oryza sativa subsp. japonica (Rice).